A 201-amino-acid polypeptide reads, in one-letter code: Large ribosomal subunit protein uL4 (201 aa).

The segment at Arg-44 to Gly-71 is disordered.

It belongs to the universal ribosomal protein uL4 family. In terms of assembly, part of the 50S ribosomal subunit.

Its function is as follows. One of the primary rRNA binding proteins, this protein initially binds near the 5'-end of the 23S rRNA. It is important during the early stages of 50S assembly. It makes multiple contacts with different domains of the 23S rRNA in the assembled 50S subunit and ribosome. In terms of biological role, forms part of the polypeptide exit tunnel. This is Large ribosomal subunit protein uL4 from Escherichia fergusonii (strain ATCC 35469 / DSM 13698 / CCUG 18766 / IAM 14443 / JCM 21226 / LMG 7866 / NBRC 102419 / NCTC 12128 / CDC 0568-73).